An 88-amino-acid chain; its full sequence is Centromere protein W (88 aa).

It belongs to the CENP-W/WIP1 family. As to quaternary structure, heterodimer with CENPT; this dimer coassembles with CENPS-CENPX heterodimers at centromeres to form the tetrameric CENP-T-W-S-X complex, which is a subcomplex of the large constitutive centromere-associated network (CCAN, also known as the interphase centromere complex or ICEN). Interacts with NPM1. Highly expressed in ovary, liver, lung and pancreas and to a lower extent in breast and gastrointestinal tract cancers; such as those of the colon, rectum and stomach. Overexpressed in high grade breast invasive tumors. Expressed in many cancer cell types.

It localises to the nucleus. The protein localises to the chromosome. Its subcellular location is the centromere. It is found in the kinetochore. The protein resides in the nucleus matrix. It localises to the nucleolus. Functionally, component of the CENPA-NAC (nucleosome-associated) complex, a complex that plays a central role in assembly of kinetochore proteins, mitotic progression and chromosome segregation. The CENPA-NAC complex recruits the CENPA-CAD (nucleosome distal) complex and may be involved in incorporation of newly synthesized CENPA into centromeres. Part of a nucleosome-associated complex that binds specifically to histone H3-containing nucleosomes at the centromere, as opposed to nucleosomes containing CENPA. Component of the heterotetrameric CENP-T-W-S-X complex that binds and supercoils DNA, and plays an important role in kinetochore assembly. CENPW has a fundamental role in kinetochore assembly and function. It is one of the inner kinetochore proteins, with most further proteins binding downstream. Required for normal chromosome organization and normal progress through mitosis. This chain is Centromere protein W (CENPW), found in Homo sapiens (Human).